The following is a 128-amino-acid chain: Large ribosomal subunit protein bL17 (128 aa).

The protein belongs to the bacterial ribosomal protein bL17 family. As to quaternary structure, part of the 50S ribosomal subunit. Contacts protein L32.

The protein is Large ribosomal subunit protein bL17 of Pseudomonas savastanoi pv. phaseolicola (strain 1448A / Race 6) (Pseudomonas syringae pv. phaseolicola (strain 1448A / Race 6)).